The primary structure comprises 342 residues: Small ribosomal subunit protein uS2 (342 aa).

A disordered region spans residues 235–283 (EENAPFEQDEPRKPSQKPKQNRPENKPRFDKQAPRAAAKPEVKAEVKPE). Residues 255–283 (NRPENKPRFDKQAPRAAAKPEVKAEVKPE) are compositionally biased toward basic and acidic residues.

Belongs to the universal ribosomal protein uS2 family.

In Acholeplasma laidlawii (strain PG-8A), this protein is Small ribosomal subunit protein uS2.